A 70-amino-acid chain; its full sequence is Sec-independent protein translocase protein TatA (70 aa).

A helical transmembrane segment spans residues 1–21 (MGSFSVWHWLIVLVIVLVLFG). Positions 42–70 (GMADEDQTPPPADANANAKTVDHKADEIK) are disordered. Over residues 61–70 (TVDHKADEIK) the composition is skewed to basic and acidic residues.

It belongs to the TatA/E family. In terms of assembly, the Tat system comprises two distinct complexes: a TatABC complex, containing multiple copies of TatA, TatB and TatC subunits, and a separate TatA complex, containing only TatA subunits. Substrates initially bind to the TatABC complex, which probably triggers association of the separate TatA complex to form the active translocon.

The protein localises to the cell inner membrane. Part of the twin-arginine translocation (Tat) system that transports large folded proteins containing a characteristic twin-arginine motif in their signal peptide across membranes. TatA could form the protein-conducting channel of the Tat system. In Agrobacterium fabrum (strain C58 / ATCC 33970) (Agrobacterium tumefaciens (strain C58)), this protein is Sec-independent protein translocase protein TatA.